The following is a 305-amino-acid chain: Virulence plasmid integrase pGP7-D (305 aa).

A Core-binding (CB) domain is found at 13–99; the sequence is LTFGEASEIW…CYISFTKFLY (87 aa). The region spanning 127–303 is the Tyr recombinase domain; sequence VKTVSISKKE…GNSSVANIPT (177 aa). Catalysis depends on residues lysine 188 and arginine 257. Tyrosine 289 serves as the catalytic O-(3'-phospho-DNA)-tyrosine intermediate.

It belongs to the 'phage' integrase family.

The chain is Virulence plasmid integrase pGP7-D from Chlamydia muridarum (strain MoPn / Nigg).